Reading from the N-terminus, the 285-residue chain is MSILQLVLIALMQGITEWLPISSSAHVMLVSDVVGLAGRDELLINAASNAGTLLAMLLYFRKDVAAAIAGGFELLGAPVTRKPLSAGGRLALCILVATPFALAGAVIYENFIPENIWTALRSVYAVAASTIVFGALLWWADARGGQSRSEGDMTLRDAFLIGASQLVAVIIPGTSRSGITMTAARALGYERVEAARFSMLIGAPILAAVSLYGLLGLATTPADGMGASLTDGLIVAALAFVSGYASIGLLMALLRKMSFLPFVLYRFALGIALLATSPIVAGAMG.

The next 7 helical transmembrane spans lie at 40-60 (DELL…LLYF), 92-112 (LCIL…ENFI), 122-142 (SVYA…WADA), 159-179 (FLIG…RSGI), 197-217 (FSML…LLGL), 233-253 (LIVA…LMAL), and 259-279 (FLPF…TSPI).

The protein belongs to the UppP family.

It localises to the cell inner membrane. It catalyses the reaction di-trans,octa-cis-undecaprenyl diphosphate + H2O = di-trans,octa-cis-undecaprenyl phosphate + phosphate + H(+). In terms of biological role, catalyzes the dephosphorylation of undecaprenyl diphosphate (UPP). Confers resistance to bacitracin. This chain is Undecaprenyl-diphosphatase, found in Hyphomonas neptunium (strain ATCC 15444).